Consider the following 153-residue polypeptide: Endoribonuclease YbeY (153 aa).

The Zn(2+) site is built by His118, His122, and His128.

It belongs to the endoribonuclease YbeY family. It depends on Zn(2+) as a cofactor.

Its subcellular location is the cytoplasm. In terms of biological role, single strand-specific metallo-endoribonuclease involved in late-stage 70S ribosome quality control and in maturation of the 3' terminus of the 16S rRNA. This chain is Endoribonuclease YbeY, found in Pelagibacter ubique (strain HTCC1062).